The primary structure comprises 316 residues: 4-hydroxy-3-methylbut-2-enyl diphosphate reductase (316 aa).

Cys-12 is a [4Fe-4S] cluster binding site. (2E)-4-hydroxy-3-methylbut-2-enyl diphosphate-binding residues include His-41 and His-74. 2 residues coordinate dimethylallyl diphosphate: His-41 and His-74. Isopentenyl diphosphate contacts are provided by His-41 and His-74. Cys-96 contributes to the [4Fe-4S] cluster binding site. His-124 contacts (2E)-4-hydroxy-3-methylbut-2-enyl diphosphate. His-124 is a dimethylallyl diphosphate binding site. His-124 is an isopentenyl diphosphate binding site. Residue Glu-126 is the Proton donor of the active site. Thr-169 is a (2E)-4-hydroxy-3-methylbut-2-enyl diphosphate binding site. Cys-199 provides a ligand contact to [4Fe-4S] cluster. (2E)-4-hydroxy-3-methylbut-2-enyl diphosphate contacts are provided by Ser-227, Ser-228, Asn-229, and Ser-271. The dimethylallyl diphosphate site is built by Ser-227, Ser-228, Asn-229, and Ser-271. Ser-227, Ser-228, Asn-229, and Ser-271 together coordinate isopentenyl diphosphate.

This sequence belongs to the IspH family. Requires [4Fe-4S] cluster as cofactor.

The catalysed reaction is isopentenyl diphosphate + 2 oxidized [2Fe-2S]-[ferredoxin] + H2O = (2E)-4-hydroxy-3-methylbut-2-enyl diphosphate + 2 reduced [2Fe-2S]-[ferredoxin] + 2 H(+). The enzyme catalyses dimethylallyl diphosphate + 2 oxidized [2Fe-2S]-[ferredoxin] + H2O = (2E)-4-hydroxy-3-methylbut-2-enyl diphosphate + 2 reduced [2Fe-2S]-[ferredoxin] + 2 H(+). The protein operates within isoprenoid biosynthesis; dimethylallyl diphosphate biosynthesis; dimethylallyl diphosphate from (2E)-4-hydroxy-3-methylbutenyl diphosphate: step 1/1. It functions in the pathway isoprenoid biosynthesis; isopentenyl diphosphate biosynthesis via DXP pathway; isopentenyl diphosphate from 1-deoxy-D-xylulose 5-phosphate: step 6/6. Its function is as follows. Catalyzes the conversion of 1-hydroxy-2-methyl-2-(E)-butenyl 4-diphosphate (HMBPP) into a mixture of isopentenyl diphosphate (IPP) and dimethylallyl diphosphate (DMAPP). Acts in the terminal step of the DOXP/MEP pathway for isoprenoid precursor biosynthesis. In Xanthomonas oryzae pv. oryzae (strain MAFF 311018), this protein is 4-hydroxy-3-methylbut-2-enyl diphosphate reductase.